A 385-amino-acid chain; its full sequence is Transcription termination factor 2, mitochondrial (385 aa).

A mitochondrion-targeting transit peptide spans 1–35; that stretch reads MSWRLLTGYQLCRLRLFRKPQPALKIRPSSVCVTY.

This sequence belongs to the mTERF family. Monomer.

Its subcellular location is the mitochondrion matrix. The protein resides in the mitochondrion nucleoid. Binds mitochondrial DNA and plays a role in the regulation of transcription of mitochondrial mRNA and rRNA species. The polypeptide is Transcription termination factor 2, mitochondrial (Mterf2) (Rattus norvegicus (Rat)).